A 334-amino-acid chain; its full sequence is Methionine adenosyltransferase 2 subunit beta (334 aa).

NADP(+)-binding positions include 37–40 (TGLL), 60–62 (FRR), 71–72 (NL), cysteine 93, arginine 97, tyrosine 159, and leucine 185. Threonine 309 is modified (phosphothreonine). The tract at residues 319–334 (LWPFLIDKRWRQTVFH) is required for interaction with MAT2A.

The protein belongs to the dTDP-4-dehydrorhamnose reductase family. MAT2B subfamily. Heterotrimer; composed of a catalytic MAT2A homodimer that binds one regulatory MAT2B chain. Heterohexamer; composed of a central, catalytic MAT2A homotetramer flanked on either side by a regulatory MAT2B chain. NADP binding increases the affinity for MAT2A.

It participates in amino-acid biosynthesis; S-adenosyl-L-methionine biosynthesis; S-adenosyl-L-methionine from L-methionine: step 1/1. Regulatory subunit of S-adenosylmethionine synthetase 2, an enzyme that catalyzes the formation of S-adenosylmethionine from methionine and ATP. Regulates MAT2A catalytic activity by changing its kinetic properties, increasing its affinity for L-methionine. Can bind NADP (in vitro). This chain is Methionine adenosyltransferase 2 subunit beta (Mat2b), found in Mus musculus (Mouse).